We begin with the raw amino-acid sequence, 121 residues long: Small ribosomal subunit protein uS13 (121 aa).

The interval 94 to 121 is disordered; that stretch reads GLPVRGQNTKNNSRTRKGPRRTVANKKK. Basic residues predominate over residues 106-121; sequence SRTRKGPRRTVANKKK.

This sequence belongs to the universal ribosomal protein uS13 family. As to quaternary structure, part of the 30S ribosomal subunit. Forms a loose heterodimer with protein S19. Forms two bridges to the 50S subunit in the 70S ribosome.

Its function is as follows. Located at the top of the head of the 30S subunit, it contacts several helices of the 16S rRNA. In the 70S ribosome it contacts the 23S rRNA (bridge B1a) and protein L5 of the 50S subunit (bridge B1b), connecting the 2 subunits; these bridges are implicated in subunit movement. Contacts the tRNAs in the A and P-sites. This is Small ribosomal subunit protein uS13 from Halalkalibacterium halodurans (strain ATCC BAA-125 / DSM 18197 / FERM 7344 / JCM 9153 / C-125) (Bacillus halodurans).